The following is a 94-amino-acid chain: Co-chaperonin GroES (94 aa).

This sequence belongs to the GroES chaperonin family. In terms of assembly, heptamer of 7 subunits arranged in a ring. Interacts with the chaperonin GroEL.

The protein localises to the cytoplasm. Its function is as follows. Together with the chaperonin GroEL, plays an essential role in assisting protein folding. The GroEL-GroES system forms a nano-cage that allows encapsulation of the non-native substrate proteins and provides a physical environment optimized to promote and accelerate protein folding. GroES binds to the apical surface of the GroEL ring, thereby capping the opening of the GroEL channel. The chain is Co-chaperonin GroES from Staphylococcus carnosus (strain TM300).